Consider the following 427-residue polypeptide: Glycophorin-binding protein-related antigen (427 aa).

GBP repeat units lie at residues 109-149 (LTSA…DELE), 150-189 (TSAD…DEVE), 190-229 (SSAD…DELE), 230-269 (TSAD…EVET), 270-307 (SADP…SEVE), 308-347 (TSAD…DELE), 348-387 (TSAD…DELE), and 388-427 (TSAD…DESS).

The sequence is that of Glycophorin-binding protein-related antigen (GBPH) from Plasmodium falciparum (isolate FCBR / Columbia).